We begin with the raw amino-acid sequence, 101 residues long: Protein Tat (101 aa).

Positions 1–24 (MEPVDPRLEPWKHPGSQPKTACTN) are interaction with human CREBBP. The interval 1 to 48 (MEPVDPRLEPWKHPGSQPKTACTNCYCKKCCFHCQVCFTKKALGISYG) is transactivation. Residues Cys22, Cys25, and Cys27 each coordinate Zn(2+). The cysteine-rich stretch occupies residues 22–37 (CTNCYCKKCCFHCQVC). Lys28 is subject to N6-acetyllysine; by host PCAF. Positions 30, 33, 34, and 37 each coordinate Zn(2+). The segment at 38–48 (FTKKALGISYG) is core. Positions 47–101 (YGRKKRRQRRRAHQDSQNHQASLSKQPSSQTRGDPTGPKEPKKEVEREAETDPLD) are disordered. Positions 48–58 (GRKKRRQRRRA) are enriched in basic residues. The short motif at 49-57 (RKKRRQRRR) is the Nuclear localization signal, RNA-binding (TAR), and protein transduction element. The interaction with the host capping enzyme RNGTT stretch occupies residues 49–86 (RKKRRQRRRAHQDSQNHQASLSKQPSSQTRGDPTGPKE). N6-acetyllysine; by host EP300 and GCN5L2 occurs at positions 50 and 51. Asymmetric dimethylarginine; by host PRMT6 is present on residues Arg52 and Arg53. The span at 61–79 (DSQNHQASLSKQPSSQTRG) shows a compositional bias: polar residues. Lys71 is covalently cross-linked (Glycyl lysine isopeptide (Lys-Gly) (interchain with G-Cter in ubiquitin)). A Cell attachment site motif is present at residues 78 to 80 (RGD). The segment covering 83–101 (GPKEPKKEVEREAETDPLD) has biased composition (basic and acidic residues).

It belongs to the lentiviruses Tat family. In terms of assembly, interacts with host CCNT1. Associates with the P-TEFb complex composed at least of Tat, P-TEFb (CDK9 and CCNT1), TAR RNA, RNA Pol II. Recruits the HATs CREBBP, TAF1/TFIID, EP300, PCAF and GCN5L2. Interacts with host KAT5/Tip60; this interaction targets the latter to degradation. Interacts with the host deacetylase SIRT1. Interacts with host capping enzyme RNGTT; this interaction stimulates RNGTT. Binds to host KDR, and to the host integrins ITGAV/ITGB3 and ITGA5/ITGB1. Interacts with host KPNB1/importin beta-1 without previous binding to KPNA1/importin alpha-1. Interacts with EIF2AK2. Interacts with host nucleosome assembly protein NAP1L1; this interaction may be required for the transport of Tat within the nucleus, since the two proteins interact at the nuclear rim. Interacts with host C1QBP/SF2P32; this interaction involves lysine-acetylated Tat. Interacts with the host chemokine receptors CCR2, CCR3 and CXCR4. Interacts with host DPP4/CD26; this interaction may trigger an anti-proliferative effect. Interacts with host LDLR. Interacts with the host extracellular matrix metalloproteinase MMP1. Interacts with host PRMT6; this interaction mediates Tat's methylation. Interacts with, and is ubiquitinated by MDM2/Hdm2. Interacts with host PSMC3 and HTATIP2. Interacts with STAB1; this interaction may overcome SATB1-mediated repression of IL2 and IL2RA (interleukin) in T cells by binding to the same domain than HDAC1. Interacts (when acetylated) with human CDK13, thereby increasing HIV-1 mRNA splicing and promoting the production of the doubly spliced HIV-1 protein Nef. Interacts with host TBP; this interaction modulates the activity of transcriptional pre-initiation complex. Interacts with host RELA. Interacts with host PLSCR1; this interaction negatively regulates Tat transactivation activity by altering its subcellular distribution. Asymmetrical arginine methylation by host PRMT6 seems to diminish the transactivation capacity of Tat and affects the interaction with host CCNT1. In terms of processing, acetylation by EP300, CREBBP, GCN5L2/GCN5 and PCAF regulates the transactivation activity of Tat. EP300-mediated acetylation of Lys-50 promotes dissociation of Tat from the TAR RNA through the competitive binding to PCAF's bromodomain. In addition, the non-acetylated Tat's N-terminus can also interact with PCAF. PCAF-mediated acetylation of Lys-28 enhances Tat's binding to CCNT1. Lys-50 is deacetylated by SIRT1. Post-translationally, polyubiquitination by host MDM2 does not target Tat to degradation, but activates its transactivation function and fosters interaction with CCNT1 and TAR RNA. Phosphorylated by EIF2AK2 on serine and threonine residues adjacent to the basic region important for TAR RNA binding and function. Phosphorylation of Tat by EIF2AK2 is dependent on the prior activation of EIF2AK2 by dsRNA.

It localises to the host nucleus. The protein resides in the host nucleolus. It is found in the host cytoplasm. Its subcellular location is the secreted. Its function is as follows. Transcriptional activator that increases RNA Pol II processivity, thereby increasing the level of full-length viral transcripts. Recognizes a hairpin structure at the 5'-LTR of the nascent viral mRNAs referred to as the transactivation responsive RNA element (TAR) and recruits the cyclin T1-CDK9 complex (P-TEFb complex) that will in turn hyperphosphorylate the RNA polymerase II to allow efficient elongation. The CDK9 component of P-TEFb and other Tat-activated kinases hyperphosphorylate the C-terminus of RNA Pol II that becomes stabilized and much more processive. Other factors such as HTATSF1/Tat-SF1, SUPT5H/SPT5, and HTATIP2 are also important for Tat's function. Besides its effect on RNA Pol II processivity, Tat induces chromatin remodeling of proviral genes by recruiting the histone acetyltransferases (HATs) CREBBP, EP300 and PCAF to the chromatin. This also contributes to the increase in proviral transcription rate, especially when the provirus integrates in transcriptionally silent region of the host genome. To ensure maximal activation of the LTR, Tat mediates nuclear translocation of NF-kappa-B by interacting with host RELA. Through its interaction with host TBP, Tat may also modulate transcription initiation. Tat can reactivate a latently infected cell by penetrating in it and transactivating its LTR promoter. In the cytoplasm, Tat is thought to act as a translational activator of HIV-1 mRNAs. Extracellular circulating Tat can be endocytosed by surrounding uninfected cells via the binding to several surface receptors such as CD26, CXCR4, heparan sulfate proteoglycans (HSPG) or LDLR. Neurons are rarely infected, but they internalize Tat via their LDLR. Through its interaction with nuclear HATs, Tat is potentially able to control the acetylation-dependent cellular gene expression. Modulates the expression of many cellular genes involved in cell survival, proliferation or in coding for cytokines or cytokine receptors. Tat plays a role in T-cell and neurons apoptosis. Tat induced neurotoxicity and apoptosis probably contribute to neuroAIDS. Circulating Tat also acts as a chemokine-like and/or growth factor-like molecule that binds to specific receptors on the surface of the cells, affecting many cellular pathways. In the vascular system, Tat binds to ITGAV/ITGB3 and ITGA5/ITGB1 integrins dimers at the surface of endothelial cells and competes with bFGF for heparin-binding sites, leading to an excess of soluble bFGF. The sequence is that of Protein Tat from Homo sapiens (Human).